We begin with the raw amino-acid sequence, 206 residues long: Ribosomal RNA small subunit methyltransferase G (206 aa).

S-adenosyl-L-methionine is bound by residues Gly73, Leu78, 124-125 (VE), and Arg139.

It belongs to the methyltransferase superfamily. RNA methyltransferase RsmG family.

It is found in the cytoplasm. The catalysed reaction is guanosine(527) in 16S rRNA + S-adenosyl-L-methionine = N(7)-methylguanosine(527) in 16S rRNA + S-adenosyl-L-homocysteine. Its function is as follows. Specifically methylates the N7 position of guanine in position 527 of 16S rRNA. This is Ribosomal RNA small subunit methyltransferase G from Pectobacterium atrosepticum (strain SCRI 1043 / ATCC BAA-672) (Erwinia carotovora subsp. atroseptica).